The sequence spans 153 residues: MTDQVNRPKGVTSVALIAHDNKKADLIAWVEKNSVKLNKCTVYATGTTGKLIAEKTGVDVKRCHSGPLGGDQQIGALISEGKVDLLIFFWDPLEPMPHDPDIKALLRLATLWNVPSACNSATADFLVNSNLFEEFLPQRPDFDSYLSRDVPGN.

Residues 3–153 (DQVNRPKGVT…SYLSRDVPGN (151 aa)) form the MGS-like domain. Substrate-binding positions include histidine 19, lysine 23, 45–48 (TGTT), and 65–66 (SG). Aspartate 71 (proton donor/acceptor) is an active-site residue. Histidine 98 provides a ligand contact to substrate.

The protein belongs to the methylglyoxal synthase family.

It carries out the reaction dihydroxyacetone phosphate = methylglyoxal + phosphate. Catalyzes the formation of methylglyoxal from dihydroxyacetone phosphate. The protein is Methylglyoxal synthase of Hahella chejuensis (strain KCTC 2396).